Reading from the N-terminus, the 178-residue chain is Protein PilI (178 aa).

Residues 34–173 (SWSGIGFRMG…PHALAQHQGF (140 aa)) enclose the CheW-like domain.

In terms of biological role, may be a part of a signal-transduction system that regulates twitching motility by controlling pilus function (extension and retraction). The protein is Protein PilI (pilI) of Pseudomonas aeruginosa (strain ATCC 15692 / DSM 22644 / CIP 104116 / JCM 14847 / LMG 12228 / 1C / PRS 101 / PAO1).